The following is a 62-amino-acid chain: Large ribosomal subunit protein eL37 (62 aa).

Residues Cys20, Cys23, Cys35, and Cys38 each contribute to the Zn(2+) site. The C4-type zinc-finger motif lies at 20 to 38; the sequence is CRRCGRKAFNVKKGYCAAC.

The protein belongs to the eukaryotic ribosomal protein eL37 family. It depends on Zn(2+) as a cofactor.

Functionally, binds to the 23S rRNA. The sequence is that of Large ribosomal subunit protein eL37 (rpl37e) from Pyrococcus abyssi (strain GE5 / Orsay).